Consider the following 483-residue polypeptide: Proline--tRNA ligase (483 aa).

This sequence belongs to the class-II aminoacyl-tRNA synthetase family. ProS type 3 subfamily. Homodimer.

It localises to the cytoplasm. It carries out the reaction tRNA(Pro) + L-proline + ATP = L-prolyl-tRNA(Pro) + AMP + diphosphate. Catalyzes the attachment of proline to tRNA(Pro) in a two-step reaction: proline is first activated by ATP to form Pro-AMP and then transferred to the acceptor end of tRNA(Pro). In Sulfolobus acidocaldarius (strain ATCC 33909 / DSM 639 / JCM 8929 / NBRC 15157 / NCIMB 11770), this protein is Proline--tRNA ligase.